Consider the following 196-residue polypeptide: Probable malonic semialdehyde reductase RutE (196 aa).

Belongs to the nitroreductase family. HadB/RutE subfamily. FMN serves as cofactor.

It catalyses the reaction 3-hydroxypropanoate + NADP(+) = 3-oxopropanoate + NADPH + H(+). Its function is as follows. May reduce toxic product malonic semialdehyde to 3-hydroxypropionic acid, which is excreted. This chain is Probable malonic semialdehyde reductase RutE, found in Klebsiella pneumoniae subsp. pneumoniae (strain ATCC 700721 / MGH 78578).